The primary structure comprises 346 residues: 2,5-dichlorohydroquinone reductive dechlorinase (346 aa).

In terms of domain architecture, GST N-terminal spans 43–154 (PRFELFHFVF…YLCDALSGGT (112 aa)). In terms of domain architecture, GST C-terminal spans 189–335 (DRRPESMQAV…AIIQWPGHPP (147 aa)).

This sequence belongs to the GST superfamily.

It catalyses the reaction 2,5-dichlorohydroquinone + 2 glutathione = chlorohydroquinone + glutathione disulfide + chloride + H(+). The catalysed reaction is chlorohydroquinone + 2 glutathione = hydroquinone + glutathione disulfide + chloride + H(+). It participates in xenobiotic degradation; gamma-hexachlorocyclohexane degradation. In terms of biological role, catalyzes the degradation of 2,5-dichlorohydroquinone (2,5-DCHQ) into hydroquinone (HQ) via chlorohydroquinone (CHQ). This is 2,5-dichlorohydroquinone reductive dechlorinase from Sphingobium indicum (strain DSM 16412 / CCM 7286 / MTCC 6364 / B90A).